A 213-amino-acid polypeptide reads, in one-letter code: MATEVAAAVPPPQLDAEENSGLEAAAAEAKIQPSSGPHKLERKWTFWFDNQSKPKQGAAWGSSLRKAYTFETVQEFWCLYDQVFKPSKFPPNADFHLFRAGVEPKWEDPECANGGKWTVTSRSKASLDTMWLETLMALIGEQFDEADEICGVVASVRQRQDKLALWTRNAANEAAQMGIGRKWKEIIDVTDKITYSFHDDSKRERSAKPRYNV.

The disordered stretch occupies residues 1-37; that stretch reads MATEVAAAVPPPQLDAEENSGLEAAAAEAKIQPSSGP. MRNA contacts are provided by residues 56–61, Lys88, and 106–107; these read QGAAWG and WE. Cys111 and Cys150 are joined by a disulfide. MRNA-binding positions include 157–162 and 202–205; these read RQRQDK and KRER.

It belongs to the eukaryotic initiation factor 4E family. As to quaternary structure, EIF4F is a multi-subunit complex, the composition of which varies with external and internal environmental conditions. It is composed of at least EIF4A, EIF4E and EIF4G. EIF4E is also known to interact with other partners. In higher plants two isoforms of EIF4F have been identified, named isoform EIF4F and isoform EIF(iso)4F. Isoform EIF4F has subunits p220 and p26, whereas isoform EIF(iso)4F has subunits p82 and p28. (Microbial infection) Interacts with potyvirus viral genome-linked protein (VPg) of plum pox virus (PPV) strain D both in nucleus and cytoplasm; this interaction is possible in susceptible hosts but is impaired in resistant plants. According to the redox status, the Cys-111-Cys-150 disulfide bridge may have a role in regulating protein function by affecting its ability to bind capped mRNA. Mostly expressed in leaves, flower buds, leaf buds and anthers, to a lower extent in roots, stems and green immature fruit, and, at low levels, in petals.

The protein resides in the cytoplasm. The protein localises to the nucleus. In terms of biological role, component of the protein complex eIF4F, which is involved in the recognition of the mRNA cap, ATP-dependent unwinding of 5'-terminal secondary structure and recruitment of mRNA to the ribosome. Recognizes and binds the 7-methylguanosine-containing mRNA cap during an early step in the initiation of protein synthesis and facilitates ribosome binding by inducing the unwinding of the mRNAs secondary structures. Key component of recessive resistance to potyviruses such as the plum pox virus (PPV) strain D. (Microbial infection) Susceptibility host factor required for viral infection by recruiting viral RNAs to the host ribosomal complex via an interaction with viral genome-linked protein (VPg). The chain is Eukaryotic translation initiation factor isoform 4E from Prunus domestica (Garden plum).